Consider the following 550-residue polypeptide: Glucose-6-phosphate isomerase 1 (550 aa).

Residue Glu-355 is the Proton donor of the active site. Catalysis depends on residues His-386 and Lys-512.

This sequence belongs to the GPI family.

Its subcellular location is the cytoplasm. The enzyme catalyses alpha-D-glucose 6-phosphate = beta-D-fructose 6-phosphate. The protein operates within carbohydrate biosynthesis; gluconeogenesis. It participates in carbohydrate degradation; glycolysis; D-glyceraldehyde 3-phosphate and glycerone phosphate from D-glucose: step 2/4. In terms of biological role, catalyzes the reversible isomerization of glucose-6-phosphate to fructose-6-phosphate. The polypeptide is Glucose-6-phosphate isomerase 1 (Rhodococcus jostii (strain RHA1)).